We begin with the raw amino-acid sequence, 166 residues long: Keratin, type II cytoskeletal 68 kDa, component IB (166 aa).

Residues 1–41 form the IF rod domain; the sequence is EAKDDLARLLRDYQDAMNVKLALDVEIATYRKLLEGEECRM. Residues 1-41 form a coil 2B region; the sequence is EAKDDLARLLRDYQDAMNVKLALDVEIATYRKLLEGEECRM. A tail region spans residues 42–166; that stretch reads SGECPSAVSI…FSQSSQRTSR (125 aa). Residues 122–146 show a composition bias toward gly residues; sequence GFGGGSSGFGSGSGGRSGVSGGGLS. The segment at 122–166 is disordered; that stretch reads GFGGGSSGFGSGSGGRSGVSGGGLSSGSSRGGSVRFSQSSQRTSR. Residues 147 to 166 show a composition bias toward low complexity; the sequence is SGSSRGGSVRFSQSSQRTSR.

It belongs to the intermediate filament family. Heterotetramer of two type I and two type II keratins.

This is Keratin, type II cytoskeletal 68 kDa, component IB from Bos taurus (Bovine).